A 380-amino-acid polypeptide reads, in one-letter code: Chorismate synthase (380 aa).

Arg-47 lines the NADP(+) pocket. FMN is bound by residues 124–126 (RSS), Gly-288, 303–307 (KPTST), and Arg-329.

It belongs to the chorismate synthase family. As to quaternary structure, homotetramer. It depends on FMNH2 as a cofactor.

The enzyme catalyses 5-O-(1-carboxyvinyl)-3-phosphoshikimate = chorismate + phosphate. The protein operates within metabolic intermediate biosynthesis; chorismate biosynthesis; chorismate from D-erythrose 4-phosphate and phosphoenolpyruvate: step 7/7. In terms of biological role, catalyzes the anti-1,4-elimination of the C-3 phosphate and the C-6 proR hydrogen from 5-enolpyruvylshikimate-3-phosphate (EPSP) to yield chorismate, which is the branch point compound that serves as the starting substrate for the three terminal pathways of aromatic amino acid biosynthesis. This reaction introduces a second double bond into the aromatic ring system. The protein is Chorismate synthase of Leptospira borgpetersenii serovar Hardjo-bovis (strain JB197).